The sequence spans 517 residues: Crotonobetaine/carnitine--CoA ligase (517 aa).

The protein belongs to the ATP-dependent AMP-binding enzyme family.

The catalysed reaction is 4-(trimethylamino)butanoate + ATP + CoA = 4-(trimethylamino)butanoyl-CoA + AMP + diphosphate. It catalyses the reaction crotonobetaine + ATP + CoA = crotonobetainyl-CoA + AMP + diphosphate. The enzyme catalyses (R)-carnitine + ATP + CoA = (R)-carnitinyl-CoA + AMP + diphosphate. The protein operates within amine and polyamine metabolism; carnitine metabolism. Functionally, catalyzes the transfer of CoA to carnitine, generating the initial carnitinyl-CoA needed for the CaiB reaction cycle. Also has activity toward crotonobetaine and gamma-butyrobetaine. The protein is Crotonobetaine/carnitine--CoA ligase of Salmonella typhi.